The chain runs to 538 residues: Chaperonin GroEL 2 (538 aa).

Residues 29–32, 86–90, glycine 412, 479–481, and aspartate 495 each bind ATP; these read TLGP, DGTTT, and NAA.

The protein belongs to the chaperonin (HSP60) family. Forms a cylinder of 14 subunits composed of two heptameric rings stacked back-to-back. Interacts with the co-chaperonin GroES.

It localises to the cytoplasm. The enzyme catalyses ATP + H2O + a folded polypeptide = ADP + phosphate + an unfolded polypeptide.. Together with its co-chaperonin GroES, plays an essential role in assisting protein folding. The GroEL-GroES system forms a nano-cage that allows encapsulation of the non-native substrate proteins and provides a physical environment optimized to promote and accelerate protein folding. This chain is Chaperonin GroEL 2, found in Renibacterium salmoninarum (strain ATCC 33209 / DSM 20767 / JCM 11484 / NBRC 15589 / NCIMB 2235).